The following is a 233-amino-acid chain: Orotidine 5'-phosphate decarboxylase (233 aa).

Residues aspartate 13, lysine 35, 62-71 (DLKFHDIPNT), threonine 122, arginine 182, glutamine 191, glycine 211, and arginine 212 each bind substrate. Lysine 64 functions as the Proton donor in the catalytic mechanism.

This sequence belongs to the OMP decarboxylase family. Type 1 subfamily. As to quaternary structure, homodimer.

The catalysed reaction is orotidine 5'-phosphate + H(+) = UMP + CO2. It participates in pyrimidine metabolism; UMP biosynthesis via de novo pathway; UMP from orotate: step 2/2. Functionally, catalyzes the decarboxylation of orotidine 5'-monophosphate (OMP) to uridine 5'-monophosphate (UMP). This is Orotidine 5'-phosphate decarboxylase from Pseudomonas putida (strain GB-1).